The following is a 218-amino-acid chain: Adenylate kinase (218 aa).

10–15 provides a ligand contact to ATP; that stretch reads GAGKGT. Positions 30–59 are NMP; that stretch reads STGDMLRAAVKAGTPLGLEAKKVMDAGGLV. Residues Thr-31, Arg-36, 57–59, 85–88, and Gln-92 contribute to the AMP site; these read GLV and GFPR. Positions 122–159 are LID; sequence GRRVHVASGRTYHVKFNPPKVAGKDDETGEDLIQRADD. ATP contacts are provided by residues Arg-123 and 132–133; that span reads TY. The AMP site is built by Arg-156 and Arg-167. ATP is bound at residue Gly-203.

Belongs to the adenylate kinase family. Monomer.

The protein localises to the cytoplasm. It catalyses the reaction AMP + ATP = 2 ADP. It functions in the pathway purine metabolism; AMP biosynthesis via salvage pathway; AMP from ADP: step 1/1. Catalyzes the reversible transfer of the terminal phosphate group between ATP and AMP. Plays an important role in cellular energy homeostasis and in adenine nucleotide metabolism. The protein is Adenylate kinase of Laribacter hongkongensis (strain HLHK9).